The chain runs to 132 residues: Large ribosomal subunit protein bL17 (132 aa).

It belongs to the bacterial ribosomal protein bL17 family. As to quaternary structure, part of the 50S ribosomal subunit. Contacts protein L32.

In Ralstonia pickettii (strain 12J), this protein is Large ribosomal subunit protein bL17.